The primary structure comprises 298 residues: Glutamyl-Q tRNA(Asp) synthetase (298 aa).

L-glutamate is bound by residues 9-13 (RFAPS) and Glu-45. Residues 12–22 (PSPSGELHFGS) carry the 'HIGH' region motif. 4 residues coordinate Zn(2+): Cys-101, Cys-103, Tyr-115, and Cys-119. 2 residues coordinate L-glutamate: Tyr-172 and Arg-190. Positions 228-232 (KLSKQ) match the 'KMSKS' region motif. Lys-231 is a binding site for ATP.

The protein belongs to the class-I aminoacyl-tRNA synthetase family. GluQ subfamily. The cofactor is Zn(2+).

Functionally, catalyzes the tRNA-independent activation of glutamate in presence of ATP and the subsequent transfer of glutamate onto a tRNA(Asp). Glutamate is transferred on the 2-amino-5-(4,5-dihydroxy-2-cyclopenten-1-yl) moiety of the queuosine in the wobble position of the QUC anticodon. This chain is Glutamyl-Q tRNA(Asp) synthetase, found in Salmonella paratyphi A (strain ATCC 9150 / SARB42).